The chain runs to 380 residues: Cytochrome b (380 aa).

A run of 4 helical transmembrane segments spans residues 34 to 54, 78 to 99, 114 to 134, and 179 to 199; these read FGSL…LLAM, WLIR…YLHI, WNTG…GYVL, and FFAL…IHLT. Heme b-binding residues include histidine 84 and histidine 98. Heme b-binding residues include histidine 183 and histidine 197. An a ubiquinone-binding site is contributed by histidine 202. Helical transmembrane passes span 227–247, 289–309, 321–341, and 348–368; these read LKDI…ALFS, LGGV…PFLH, LSQL…WVGS, and FIII…ILFP.

This sequence belongs to the cytochrome b family. As to quaternary structure, the cytochrome bc1 complex contains 11 subunits: 3 respiratory subunits (MT-CYB, CYC1 and UQCRFS1), 2 core proteins (UQCRC1 and UQCRC2) and 6 low-molecular weight proteins (UQCRH/QCR6, UQCRB/QCR7, UQCRQ/QCR8, UQCR10/QCR9, UQCR11/QCR10 and a cleavage product of UQCRFS1). This cytochrome bc1 complex then forms a dimer. It depends on heme b as a cofactor.

The protein resides in the mitochondrion inner membrane. Component of the ubiquinol-cytochrome c reductase complex (complex III or cytochrome b-c1 complex) that is part of the mitochondrial respiratory chain. The b-c1 complex mediates electron transfer from ubiquinol to cytochrome c. Contributes to the generation of a proton gradient across the mitochondrial membrane that is then used for ATP synthesis. The chain is Cytochrome b (MT-CYB) from Thalassoica antarctica (Antarctic petrel).